The chain runs to 184 residues: MRGMGDDGMGPMAMAPPRSGHATAAAPPPPQHKMAMMMHMTFFWSDRAVVLIRGWPGERGAGMYALCLLFVLALAALTEGLSVLSRRLARRGGGAASSDGGRPAPAPASSAALLTAVHAARMGMAYLVMLAVMSFNVGVLLAAVAGHALGFLLARSRVRPAARDGGGGVACEHGGLPPADGSKT.

The span at 1–25 (MRGMGDDGMGPMAMAPPRSGHATAA) shows a compositional bias: low complexity. The segment at 1-27 (MRGMGDDGMGPMAMAPPRSGHATAAAP) is disordered. Transmembrane regions (helical) follow at residues 64–84 (YALC…LSVL) and 124–144 (MAYL…LAAV).

It belongs to the copper transporter (Ctr) (TC 1.A.56) family. SLC31A subfamily.

The protein resides in the membrane. In terms of biological role, involved in the transport of copper. The sequence is that of Copper transporter 6 (COPT6) from Oryza sativa subsp. japonica (Rice).